A 302-amino-acid chain; its full sequence is Glycine--tRNA ligase alpha subunit (302 aa).

This sequence belongs to the class-II aminoacyl-tRNA synthetase family. Tetramer of two alpha and two beta subunits.

Its subcellular location is the cytoplasm. The enzyme catalyses tRNA(Gly) + glycine + ATP = glycyl-tRNA(Gly) + AMP + diphosphate. In Edwardsiella ictaluri (strain 93-146), this protein is Glycine--tRNA ligase alpha subunit.